Consider the following 191-residue polypeptide: Programmed cell death protein 6 (191 aa).

An N-acetylalanine modification is found at Ala2. EF-hand domains follow at residues 23 to 58 (PDQS…GTWT), 59 to 89 (PFNP…TGVW), 90 to 125 (KYIT…FGYR), 126 to 161 (LSDQ…LQRL), and 162 to 191 (TDIF…FSIV). 5 residues coordinate Ca(2+): Asp36, Asp38, Ser40, Val42, and Glu47. Positions 103, 105, 107, 109, and 114 each coordinate Ca(2+). Asp169, Asp171, Asp173, and Trp175 together coordinate Mg(2+).

In terms of assembly, homodimer and heterodimer; heterodimerizes (via the EF-hand 5) with PEF1. Isoform 1 and isoform 2 self-associate; probably forming homodimers. Interacts with CPNE4 (via VWFA domain). Interacts with PDCD6IP; the interaction is calcium-dependent. Interacts with RBM22. Interacts with PLSCR4. Interacts with ANXA7 and TSG101. Interacts with DAPK1. Interacts with SEC31A; the interaction is calcium-dependent and promotes monoubiquitination of SEC31A. Interacts with ANXA11 (via N-terminus); the interaction is calcium-dependent. Interacts with PLSCR3 (via N-terminus); the interaction is calcium-dependent. Interacts with MCOLN1; the interaction is calcium-dependent. Interacts with KDR; the interaction is calcium-dependent. Interacts with HEBP2; the interaction is calcium-dependent. Interacts with TFG. Isoform 1: Interacts with SHISA5, leading to stabilize it. Isoform 2: Does not interact with SHISA5. Isoform 2: Does not interact with PDCD6IP, TSG101, ANXA7 and ANXA11.

The protein localises to the endoplasmic reticulum membrane. Its subcellular location is the cytoplasmic vesicle. It is found in the COPII-coated vesicle membrane. The protein resides in the cytoplasm. It localises to the nucleus. The protein localises to the endosome. Functionally, calcium sensor that plays a key role in processes such as endoplasmic reticulum (ER)-Golgi vesicular transport, endosomal biogenesis or membrane repair. Acts as an adapter that bridges unrelated proteins or stabilizes weak protein-protein complexes in response to calcium: calcium-binding triggers exposure of apolar surface, promoting interaction with different sets of proteins thanks to 3 different hydrophobic pockets, leading to translocation to membranes. Involved in ER-Golgi transport. Regulates ER-Golgi transport by promoting the association between PDCD6IP and TSG101, thereby bridging together the ESCRT-III and ESCRT-I complexes. Together with PEF1, acts as a calcium-dependent adapter for the BCR(KLHL12) complex, a complex involved in ER-Golgi transport by regulating the size of COPII coats. In response to cytosolic calcium increase, the heterodimer formed with PEF1 interacts with, and bridges together the BCR(KLHL12) complex and SEC31 (SEC31A or SEC31B), promoting monoubiquitination of SEC31 and subsequent collagen export, which is required for neural crest specification. Involved in the regulation of the distribution and function of MCOLN1 in the endosomal pathway. Promotes localization and polymerization of TFG at endoplasmic reticulum exit site. Required for T-cell receptor-, Fas-, and glucocorticoid-induced apoptosis. May mediate Ca(2+)-regulated signals along the death pathway: interaction with DAPK1 can accelerate apoptotic cell death by increasing caspase-3 activity. Its role in apoptosis may however be indirect, as suggested by knockout experiments. May inhibit KDR/VEGFR2-dependent angiogenesis; the function involves inhibition of VEGF-induced phosphorylation of the Akt signaling pathway. Has a lower Ca(2+) affinity than isoform 1. The polypeptide is Programmed cell death protein 6 (Rattus norvegicus (Rat)).